A 279-amino-acid chain; its full sequence is NADPH-dependent 7-cyano-7-deazaguanine reductase (279 aa).

86–88 (IES) provides a ligand contact to substrate. NADPH is bound at residue 88-89 (SK). Residue C187 is the Thioimide intermediate of the active site. The active-site Proton donor is the D194. 226–227 (HE) contacts substrate. 255–256 (RG) is an NADPH binding site.

It belongs to the GTP cyclohydrolase I family. QueF type 2 subfamily. As to quaternary structure, homodimer.

It localises to the cytoplasm. It carries out the reaction 7-aminomethyl-7-carbaguanine + 2 NADP(+) = 7-cyano-7-deazaguanine + 2 NADPH + 3 H(+). It functions in the pathway tRNA modification; tRNA-queuosine biosynthesis. Catalyzes the NADPH-dependent reduction of 7-cyano-7-deazaguanine (preQ0) to 7-aminomethyl-7-deazaguanine (preQ1). In Actinobacillus pleuropneumoniae serotype 5b (strain L20), this protein is NADPH-dependent 7-cyano-7-deazaguanine reductase.